The following is a 54-amino-acid chain: uncharacterized protein (54 aa).

A helical transmembrane segment spans residues 6-26 (ILIYLLIFVAGIVIGKIRINV).

Its subcellular location is the host membrane. This is an uncharacterized protein from Acidianus convivator (ABV).